Reading from the N-terminus, the 104-residue chain is MNETEFHQLVDSQLERIEAAIDEAGADIDYETSGNVMTLEFDDGSQIIINRQEPMREIWLASKSGGYHFKSIDGEWICSKTGLELLTLLKQECDKHADEPIDWV.

This sequence belongs to the frataxin family.

Involved in iron-sulfur (Fe-S) cluster assembly. May act as a regulator of Fe-S biogenesis. The protein is Iron-sulfur cluster assembly protein CyaY of Vibrio cholerae serotype O1 (strain ATCC 39541 / Classical Ogawa 395 / O395).